We begin with the raw amino-acid sequence, 45 residues long: Myotoxin-3 (45 aa).

3 cysteine pairs are disulfide-bonded: C4–C36, C11–C30, and C18–C37.

Monomer. As to expression, expressed by the venom gland.

It is found in the secreted. Its function is as follows. Cationic peptide that possesses multiple functions. It acts as a cell-penetrating peptide (CPP), and as a potent voltage-gated potassium channel (Kv) inhibitor. It exhibits antimicrobial activities, hind limb paralysis, and severe muscle necrosis by a non-enzymatic mechanism. This is Myotoxin-3 from Crotalus viridis viridis (Prairie rattlesnake).